The chain runs to 776 residues: Ribosomal biogenesis protein LAS1L (776 aa).

A compositionally biased stretch (acidic residues) spans 185 to 227 (DEDQLDAEDPEEEEREIIADDVLEEIPEPQDDDKDEELAVEDD). The tract at residues 185 to 247 (DEDQLDAEDP…SHPEPSSRHK (63 aa)) is disordered. Residues 228 to 247 (ANTKGNEEVASHPEPSSRHK) show a composition bias toward basic and acidic residues. Phosphoserine occurs at positions 425 and 509. A disordered region spans residues 501–646 (KAIEGSSSSS…DYDDDEEEDR (146 aa)). Residues 544-557 (GNLKDVKQEEKKEN) show a composition bias toward basic and acidic residues. 2 stretches are compositionally biased toward acidic residues: residues 558 to 602 (EEEE…EEEE) and 611 to 646 (MEAD…EEDR). Phosphoserine is present on Ser-658. The segment at 677–696 (SAWQVSSEDVRWGTFPLGRL) is interaction with NOL9. Residues 733–759 (SSTLSLCCGGSNTNSSSSSSSGNMEGL) form a disordered region. Over residues 741-755 (GGSNTNSSSSSSSGN) the composition is skewed to low complexity.

The protein belongs to the LAS1 family. Component of some MLL1/MLL complex, at least composed of the core components KMT2A/MLL1, ASH2L, HCFC1/HCF1, WDR5 and RBBP5, as well as the facultative components BACC1, CHD8, E2F6, HSP70, INO80C, KANSL1, LAS1L, MAX, MCRS1, MGA, MYST1/MOF, PELP1, PHF20, PRP31, RING2, RUVB1/TIP49A, RUVB2/TIP49B, SENP3, TAF1, TAF4, TAF6, TAF7, TAF9 and TEX10. Component of the 5FMC complex, at least composed of PELP1, LAS1L, TEX10, WDR18 and SENP3; the complex interacts with methylated CHTOP and ZNF148. Interacts with NOL9 to form an ITS2 pre-rRNA endonuclease-kinase complex.

The protein resides in the nucleus. Its subcellular location is the nucleolus. It localises to the nucleoplasm. It is found in the cytoplasm. Its function is as follows. Required for the synthesis of the 60S ribosomal subunit and maturation of the 28S rRNA. Functions as a component of the Five Friends of Methylated CHTOP (5FMC) complex; the 5FMC complex is recruited to ZNF148 by methylated CHTOP, leading to desumoylation of ZNF148 and subsequent transactivation of ZNF148 target genes. Required for the efficient pre-rRNA processing at both ends of internal transcribed spacer 2 (ITS2). The sequence is that of Ribosomal biogenesis protein LAS1L (Las1l) from Mus musculus (Mouse).